Here is a 72-residue protein sequence, read N- to C-terminus: DNA-directed RNA polymerase subunit omega (72 aa).

The protein belongs to the RNA polymerase subunit omega family. In terms of assembly, the RNAP catalytic core consists of 2 alpha, 1 beta, 1 beta' and 1 omega subunit. When a sigma factor is associated with the core the holoenzyme is formed, which can initiate transcription.

It catalyses the reaction RNA(n) + a ribonucleoside 5'-triphosphate = RNA(n+1) + diphosphate. Functionally, promotes RNA polymerase assembly. Latches the N- and C-terminal regions of the beta' subunit thereby facilitating its interaction with the beta and alpha subunits. In Clostridium beijerinckii (strain ATCC 51743 / NCIMB 8052) (Clostridium acetobutylicum), this protein is DNA-directed RNA polymerase subunit omega.